Here is a 487-residue protein sequence, read N- to C-terminus: Protein nucleotidyltransferase YdiU (487 aa).

ATP is bound by residues Gly-90, Gly-92, Arg-93, Lys-113, Asp-125, Gly-126, Arg-176, and Arg-183. The active-site Proton acceptor is Asp-252. Residues Asn-253 and Asp-262 each coordinate Mg(2+). Asp-262 is a binding site for ATP.

The protein belongs to the SELO family. The cofactor is Mg(2+). Mn(2+) serves as cofactor.

It carries out the reaction L-seryl-[protein] + ATP = 3-O-(5'-adenylyl)-L-seryl-[protein] + diphosphate. The enzyme catalyses L-threonyl-[protein] + ATP = 3-O-(5'-adenylyl)-L-threonyl-[protein] + diphosphate. It catalyses the reaction L-tyrosyl-[protein] + ATP = O-(5'-adenylyl)-L-tyrosyl-[protein] + diphosphate. The catalysed reaction is L-histidyl-[protein] + UTP = N(tele)-(5'-uridylyl)-L-histidyl-[protein] + diphosphate. It carries out the reaction L-seryl-[protein] + UTP = O-(5'-uridylyl)-L-seryl-[protein] + diphosphate. The enzyme catalyses L-tyrosyl-[protein] + UTP = O-(5'-uridylyl)-L-tyrosyl-[protein] + diphosphate. Functionally, nucleotidyltransferase involved in the post-translational modification of proteins. It can catalyze the addition of adenosine monophosphate (AMP) or uridine monophosphate (UMP) to a protein, resulting in modifications known as AMPylation and UMPylation. The chain is Protein nucleotidyltransferase YdiU from Pseudomonas syringae pv. tomato (strain ATCC BAA-871 / DC3000).